The sequence spans 258 residues: Type III pantothenate kinase 1 (258 aa).

6 to 13 lines the ATP pocket; the sequence is DMGNSHIH. Residue 107–110 participates in substrate binding; sequence GADR. The active-site Proton acceptor is Asp-109. Asp-130 serves as a coordination point for K(+). Thr-133 is an ATP binding site. Thr-185 serves as a coordination point for substrate.

It belongs to the type III pantothenate kinase family. Homodimer. The cofactor is NH4(+). K(+) is required as a cofactor.

It is found in the cytoplasm. It catalyses the reaction (R)-pantothenate + ATP = (R)-4'-phosphopantothenate + ADP + H(+). Its pathway is cofactor biosynthesis; coenzyme A biosynthesis; CoA from (R)-pantothenate: step 1/5. Catalyzes the phosphorylation of pantothenate (Pan), the first step in CoA biosynthesis. The polypeptide is Type III pantothenate kinase 1 (Francisella tularensis subsp. tularensis (strain FSC 198)).